Here is a 1564-residue protein sequence, read N- to C-terminus: Superkiller complex protein 3 (1564 aa).

Serine 2 is subject to N-acetylserine. 20 TPR repeats span residues 6–39 (VKTA…EKNN), 40–73 (YNAW…EPDQ), 272–305 (GPGL…SPVC), 307–339 (SGWY…VDNL), 386–419 (PGLL…YPDL), 420–453 (AEVH…DTEV), 455–492 (EYHY…DTYM), 493–527 (GKVF…DDTD), 564–597 (KWAW…DPKD), 598–631 (FNCW…NPES), 633–665 (YSVF…KEDY), 679–713 (MAKA…RADV), 790–824 (AQHL…DSNN), 826–860 (LYWN…EQIN), 861–894 (AVAW…DPSY), 980–1013 (APAF…LQTA), 1020–1054 (NVAI…LEDI), 1056–1084 (GFAL…VESE), 1326–1359 (KWSL…NPDQ), and 1400–1433 (VPAW…ASQR).

The protein belongs to the SKI3 family. In terms of assembly, component of the SKI complex which consists of SKIC2, SKIC3 and SKIC8. Interacts with PAF1. As to expression, widely expressed with the highest levels observed in vascular tissues, lymph node, pituitary, lung and intestine. Not expressed in the liver.

The protein resides in the cytoplasm. The protein localises to the nucleus. Component of the SKI complex, a multiprotein complex that assists the RNA-degrading exosome during the mRNA decay and quality-control pathways. The SKI complex catalyzes mRNA extraction from 80S ribosomal complexes in the 3'-5' direction and channels mRNA to the cytosolic exosome for degradation. SKI-mediated extraction of mRNA from stalled ribosomes allow binding of the Pelota-HBS1L complex and subsequent ribosome disassembly by ABCE1 for ribosome recycling. In the nucleus, the SKI complex associates with transcriptionally active genes in a manner dependent on PAF1 complex (PAF1C). The polypeptide is Superkiller complex protein 3 (Homo sapiens (Human)).